Here is a 149-residue protein sequence, read N- to C-terminus: UPF0260 protein PFL_1499 (149 aa).

The protein belongs to the UPF0260 family.

The polypeptide is UPF0260 protein PFL_1499 (Pseudomonas fluorescens (strain ATCC BAA-477 / NRRL B-23932 / Pf-5)).